The chain runs to 363 residues: NAD(P)H-quinone oxidoreductase subunit 1, chloroplastic (363 aa).

Transmembrane regions (helical) follow at residues 28 to 48, 98 to 118, 129 to 149, 253 to 273, 274 to 294, 300 to 320, and 336 to 356; these read WVLA…LVIV, FSIG…VIPF, IGIF…LMSG, FGLF…FVTV, LYLG…LVEI, IFGT…FLFI, and LLNL…LLTT.

It belongs to the complex I subunit 1 family. NDH is composed of at least 16 different subunits, 5 of which are encoded in the nucleus.

The protein resides in the plastid. Its subcellular location is the chloroplast thylakoid membrane. The catalysed reaction is a plastoquinone + NADH + (n+1) H(+)(in) = a plastoquinol + NAD(+) + n H(+)(out). It catalyses the reaction a plastoquinone + NADPH + (n+1) H(+)(in) = a plastoquinol + NADP(+) + n H(+)(out). Its function is as follows. NDH shuttles electrons from NAD(P)H:plastoquinone, via FMN and iron-sulfur (Fe-S) centers, to quinones in the photosynthetic chain and possibly in a chloroplast respiratory chain. The immediate electron acceptor for the enzyme in this species is believed to be plastoquinone. Couples the redox reaction to proton translocation, and thus conserves the redox energy in a proton gradient. The polypeptide is NAD(P)H-quinone oxidoreductase subunit 1, chloroplastic (Citrus sinensis (Sweet orange)).